Here is an 86-residue protein sequence, read N- to C-terminus: Ferredoxin-like protein YgcO (86 aa).

Residues 45–74 (GNLRIDYRSCLECGTCRLLCDESTLQQWRY) enclose the 4Fe-4S ferredoxin-type domain.

This sequence belongs to the bacterial-type ferredoxin family. FixX subfamily.

Its function is as follows. Could be a 3Fe-4S cluster-containing protein. Probably participates in a redox process with YgcN, YgcQ and YgcR. The sequence is that of Ferredoxin-like protein YgcO (ygcO) from Escherichia coli (strain K12).